Here is a 204-residue protein sequence, read N- to C-terminus: Pectinesterase inhibitor 9 (204 aa).

A signal peptide spans 1 to 23; the sequence is MELKNTIFLVILLSITILQSSSA. N26 carries an N-linked (GlcNAc...) asparagine glycan. 2 cysteine pairs are disulfide-bonded: C38/C47 and C106/C157.

Belongs to the PMEI family. In terms of assembly, binds reversibly to PME3 to inhibit its activity; the stability of the PME3-PMEI9 complex and the inhibition of the pectin methylesterase (PME) activity is pH-dependent, based on protonation status of amino-acids at the complex interface. Highly expressed in roots and etiolated hypocotyls. Expressed in seedlings, leaves, stems, siliques, floral buds and mature seeds.

Its subcellular location is the secreted. It localises to the extracellular space. The protein resides in the apoplast. Its function is as follows. Pectin methylesterase (PME) inhibitor that probably targets root-expressed PME and PME3 in a moderate pH-dependent manner, mainly in slightly acidic conditions (pH 6.3 and 5.0) and to some extent at pH 7.5; this processus relies on changes in the protonation of amino acids involved in intermolecular and intramolecular interactions. Regulates de-methylesterification of pectins in roots and affects root growth. This is Pectinesterase inhibitor 9 from Arabidopsis thaliana (Mouse-ear cress).